The sequence spans 218 residues: Small ribosomal subunit protein uS3c (218 aa).

In terms of domain architecture, KH type-2 spans 47-118 (VQKNIRISSG…KLNIAITRIS (72 aa)).

It belongs to the universal ribosomal protein uS3 family. Part of the 30S ribosomal subunit.

Its subcellular location is the plastid. The protein localises to the chloroplast. This is Small ribosomal subunit protein uS3c (rps3) from Nasturtium officinale (Watercress).